A 168-amino-acid polypeptide reads, in one-letter code: Profilin-3 (168 aa).

Positions 14 to 36 (LSLEHSDKPQRRSRAKVKKKKKT) are disordered. Basic residues predominate over residues 24–36 (RRSRAKVKKKKKT).

This sequence belongs to the profilin family. In terms of assembly, occurs in many kinds of cells as a complex with monomeric actin in a 1:1 ratio. Binding to the poly-proline motif of formins induces formation of oligomers through the N-terminal hydrophobic residues of PRF3. Expressed in roots, rosette leaves, cauline leaves, stems and flowers.

It localises to the cytoplasm. It is found in the cytoskeleton. Binds to actin monomers and regulates the organization of the actin cytoskeleton. Can increase the critical concentration (Cc) of actin assembly in vitro. Acts as a downstream effector of the hydrogen sulfide signaling to regulate the assembly and depolymerization of F-actin. At high concentrations, profilin prevents the polymerization of actin, whereas it enhances it at low concentrations. Binding to the poly-proline motif of formin induces oligomerization of PRF3. PRF3 oligomers inhibit formin-mediated actin assembly to modulate plant immunity triggered by pathogen-associated molecular patterns (PAMPs). This chain is Profilin-3, found in Arabidopsis thaliana (Mouse-ear cress).